The following is a 486-amino-acid chain: uncharacterized protein (486 aa).

The chain crosses the membrane as a helical span at residues 18–38; the sequence is TLLQLFVFTVICVFVLSGLAI. Over residues 62–79 the composition is skewed to basic and acidic residues; that stretch reads DRQKQMEKQQDSGEKRSF. Disordered regions lie at residues 62–82 and 117–147; these read DRQK…FEST and IESS…GPQM. Over residues 119–132 the composition is skewed to low complexity; it reads SSSSSDSSSSSSSS. Transmembrane regions (helical) follow at residues 324–344, 365–385, and 451–471; these read VVYL…MMSI, IGQF…LASV, and MLIL…LPSI.

The protein belongs to the ABC-4 integral membrane protein family.

It is found in the cell membrane. This is an uncharacterized protein from Bacillus subtilis (strain 168).